Here is a 195-residue protein sequence, read N- to C-terminus: Molybdenum cofactor guanylyltransferase (195 aa).

GTP contacts are provided by residues 10–12, Lys-23, Asn-51, Asp-69, and Asp-99; that span reads LAG. Asp-99 serves as a coordination point for Mg(2+).

Belongs to the MobA family. As to quaternary structure, monomer. Requires Mg(2+) as cofactor.

It is found in the cytoplasm. The catalysed reaction is Mo-molybdopterin + GTP + H(+) = Mo-molybdopterin guanine dinucleotide + diphosphate. Its function is as follows. Transfers a GMP moiety from GTP to Mo-molybdopterin (Mo-MPT) cofactor (Moco or molybdenum cofactor) to form Mo-molybdopterin guanine dinucleotide (Mo-MGD) cofactor. In Histophilus somni (strain 129Pt) (Haemophilus somnus), this protein is Molybdenum cofactor guanylyltransferase.